A 289-amino-acid polypeptide reads, in one-letter code: MSEAFDCAKCNESLYGRKYIQTDSGPYCVPCYDNTFANTCAECQQLIGHDSRELFYEDRHFHEGCFRCCRCQRSLADEPFTCQDSELLCNECYCTAFSSQCSACGETVMPGSRKLEYGGQTWHEHCFLCSGCEQPLGSRSFVPDKGAHYCVPCYENKFAPRCARCSKTLTQGGVTYRDQPWHRECLVCTGCKTPLAGQQFTSRDDDPYCVACFGELFAPKCSSCKRPITGGSGGGEGAGLGGGKYVSFEDRHWHHSCFSCARCSTSLVGQGFVPDGDQVLCQGCSQAGP.

Residue serine 2 is modified to N-acetylserine. A C4-type zinc finger spans residues 7-31; that stretch reads CAKCNESLYGRKYIQTDSGPYCVPC. LIM zinc-binding domains are found at residues 40 to 92 and 101 to 153; these read CAEC…CNEC and CSAC…CVPC. Lysine 157 is subject to N6-acetyllysine. LIM zinc-binding domains are found at residues 162-212 and 221-275; these read CARC…CVAC and CSSC…FVPD. Residue lysine 244 is modified to N6-acetyllysine.

As to quaternary structure, interacts with SOX15; the interaction recruits FHL3 to FOXK1 promoters where it acts as a transcriptional coactivator of FOXK1. As to expression, expressed in myogenic progenitor cells (at protein level). Expressed in skeletal striated muscle and the heart. Expressed to a lesser extent, in lung, and kidney. Expressed in skin and skeletal muscles such as the masseter, tongue, tibialis anterior and plantar muscles.

It is found in the nucleus. Its subcellular location is the cytoplasm. In terms of biological role, recruited by SOX15 to FOXK1 promoters where it acts as a transcriptional coactivator of FOXK1. The polypeptide is Four and a half LIM domains protein 3 (Fhl3) (Mus musculus (Mouse)).